Here is a 1211-residue protein sequence, read N- to C-terminus: Transient receptor potential cation channel subfamily A member 1 homolog (1211 aa).

The Cytoplasmic portion of the chain corresponds to 1–811; the sequence is MSKKSLGLDV…LKYKWNRLGR (811 aa). 17 ANK repeats span residues 49-79, 83-112, 116-169, 173-202, 206-235, 239-270, 277-306, 311-340, 344-374, 378-407, 411-440, 473-502, 506-535, 540-569, 573-602, 605-634, and 638-669; these read NLRS…AVNA, DFMT…LPNT, EGDT…EIDP, YQLT…DVDA, NKMT…NVTK, RLNT…AIKA, EKKT…KNSC, REKE…NKNE, VKAV…NIDV, QGLT…NLTI, DERT…KKNK, DQNT…SITQ, DEET…RLLL, MGNS…DKEA, YQKT…QIES, DTKT…TIDR, and EGKT…NLMI. A helical membrane pass occupies residues 812–832; sequence PMYYFALFMYLVFIVSLTQYV. The Extracellular segment spans residues 833–870; that stretch reads RHTKAPYNVWNEESYYDSEYFDENETCPQINTTKPDVV. N-linked (GlcNAc...) asparagine glycosylation is found at N856 and N863. The chain crosses the membrane as a helical span at residues 871–891; that stretch reads WKIIIQTLAVCQILVECFQLF. The Cytoplasmic segment spans residues 892–894; the sequence is QRK. The chain crosses the membrane as a helical span at residues 895–915; sequence FAYLVNWENWIDCFIYSTALI. Residues 916–932 lie on the Extracellular side of the membrane; the sequence is TVYDFSECSATSGVRQN. The helical transmembrane segment at 933–953 threads the bilayer; the sequence is WQWILAALCIFFGWINLLFMI. The Cytoplasmic portion of the chain corresponds to 954–975; sequence RKMPRFGIFVVMFVDIVKTFFR. The helical transmembrane segment at 976–996 threads the bilayer; the sequence is FFPVFVLFIIAFSSSFYVILQ. Residues 997–1004 lie on the Extracellular side of the membrane; sequence NRPEFSTI. The segment at residues 1005–1025 is an intramembrane region (pore-forming); sequence FMSPLKTTVMMIGEFEFTGIF. Residues 1026-1048 lie on the Extracellular side of the membrane; sequence HGDETTHAEKMFGPAHTAVACAL. The helical transmembrane segment at 1049–1069 threads the bilayer; it reads FFFFCIIMTILLMNLLVGLAV. The Cytoplasmic segment spans residues 1070–1193; the sequence is DDIKGVQEKA…EKQVRLEAII (124 aa). Residues 1149–1191 adopt a coiled-coil conformation; that stretch reads EMYEREAEFTSEMTQKLQNQAAKLKNIQENIDVMYEKQVRLEA.

Belongs to the transient receptor (TC 1.A.4) family. As to quaternary structure, homotetramer. In terms of tissue distribution, expressed in many sensory neurons, including OLQ and IL1 neurons.

It is found in the cell membrane. In terms of biological role, receptor-activated non-selective cation channel involved in the nose-touch response and foraging behavior. Contributes to the neural responses of sensory neurons to touch, particularly after repeated mechanical stimulation. Has no apparent role in thermosensory or chemosensory behaviors. The protein is Transient receptor potential cation channel subfamily A member 1 homolog (trpa-1) of Caenorhabditis elegans.